Reading from the N-terminus, the 252-residue chain is Large ribosomal subunit protein uL4 (252 aa).

This sequence belongs to the universal ribosomal protein uL4 family. In terms of assembly, part of the 50S ribosomal subunit.

Its function is as follows. One of the primary rRNA binding proteins, this protein initially binds near the 5'-end of the 23S rRNA. It is important during the early stages of 50S assembly. It makes multiple contacts with different domains of the 23S rRNA in the assembled 50S subunit and ribosome. Functionally, forms part of the polypeptide exit tunnel. The protein is Large ribosomal subunit protein uL4 of Methanococcus maripaludis (strain C6 / ATCC BAA-1332).